Reading from the N-terminus, the 300-residue chain is Transcription initiation factor IIB (300 aa).

The segment at Thr-2–Glu-34 adopts a TFIIB-type zinc-finger fold. Residues Cys-7, Cys-10, Cys-26, and Cys-29 each coordinate Zn(2+). 2 repeat units span residues Ser-114–Leu-197 and Asp-210–Glu-291.

It belongs to the TFIIB family.

Functionally, stabilizes TBP binding to an archaeal box-A promoter. Also responsible for recruiting RNA polymerase II to the pre-initiation complex (DNA-TBP-TFIIB). The chain is Transcription initiation factor IIB from Pyrococcus horikoshii (strain ATCC 700860 / DSM 12428 / JCM 9974 / NBRC 100139 / OT-3).